The sequence spans 459 residues: 20S-pre-rRNA D-site endonuclease NOB1 (459 aa).

One can recognise a PINc domain in the interval 10–115 (RALILDATPL…LNNGDWRLRK (106 aa)). Residues 120–150 (ALDASKADVGTDGKQKLTEDNKKEEDSESVP) show a composition bias toward basic and acidic residues. Residues 120–205 (ALDASKADVG…EQICNDENIK (86 aa)) are disordered. A compositionally biased stretch (basic residues) spans 151-164 (KKKNKRRGGKKQKA). Residues 165-194 (KREAREAREAENANLELESKAEEHVEEAGS) show a composition bias toward basic and acidic residues. 4 residues coordinate Zn(2+): Cys-304, Cys-307, Cys-323, and Cys-326. The interval 366–385 (ASPLSKNSQKRYGKKGHVHS) is disordered. Positions 373–385 (SQKRYGKKGHVHS) are enriched in basic residues.

It belongs to the NOB1 family. As to quaternary structure, component of the small ribosomal subunit, ribosomal RNA processing complex (SSU RRP complex). Interacts with PNO1.

Its subcellular location is the cytoplasm. It localises to the nucleus. The protein localises to the nucleolus. The protein resides in the endoplasmic reticulum. In terms of biological role, required for the synthesis of 40S ribosome subunits. Has a role in processing 20S pre-rRNA into the mature 18S rRNA, where it is required for cleavage at the 3' end of the mature 18S rRNA (D-site). Accompanies the 20S pre-rRNA from the nucleus to the cytoplasm. In association with NIN1, may promote the recruitment of the proteasome to the ribosomal subunits stalled in maturation. The protein is 20S-pre-rRNA D-site endonuclease NOB1 (NOB1) of Saccharomyces cerevisiae (strain ATCC 204508 / S288c) (Baker's yeast).